The sequence spans 554 residues: Dihydroxy-acid dehydratase (554 aa).

Asp-78 is a Mg(2+) binding site. Cys-119 is a binding site for [2Fe-2S] cluster. The Mg(2+) site is built by Asp-120 and Lys-121. An N6-carboxylysine modification is found at Lys-121. A [2Fe-2S] cluster-binding site is contributed by Cys-192. Residue Glu-443 participates in Mg(2+) binding. Ser-469 (proton acceptor) is an active-site residue.

It belongs to the IlvD/Edd family. Homodimer. The cofactor is [2Fe-2S] cluster. It depends on Mg(2+) as a cofactor.

The catalysed reaction is (2R)-2,3-dihydroxy-3-methylbutanoate = 3-methyl-2-oxobutanoate + H2O. It carries out the reaction (2R,3R)-2,3-dihydroxy-3-methylpentanoate = (S)-3-methyl-2-oxopentanoate + H2O. Its pathway is amino-acid biosynthesis; L-isoleucine biosynthesis; L-isoleucine from 2-oxobutanoate: step 3/4. It participates in amino-acid biosynthesis; L-valine biosynthesis; L-valine from pyruvate: step 3/4. Functionally, functions in the biosynthesis of branched-chain amino acids. Catalyzes the dehydration of (2R,3R)-2,3-dihydroxy-3-methylpentanoate (2,3-dihydroxy-3-methylvalerate) into 2-oxo-3-methylpentanoate (2-oxo-3-methylvalerate) and of (2R)-2,3-dihydroxy-3-methylbutanoate (2,3-dihydroxyisovalerate) into 2-oxo-3-methylbutanoate (2-oxoisovalerate), the penultimate precursor to L-isoleucine and L-valine, respectively. This is Dihydroxy-acid dehydratase from Clostridium novyi (strain NT).